The chain runs to 211 residues: Guanylate kinase (211 aa).

The region spanning 5-184 (GLLIVFSGPS…AAERVKRIIE (180 aa)) is the Guanylate kinase-like domain. 12–19 (GPSGVGKG) is a binding site for ATP.

It belongs to the guanylate kinase family.

It localises to the cytoplasm. The enzyme catalyses GMP + ATP = GDP + ADP. Functionally, essential for recycling GMP and indirectly, cGMP. The sequence is that of Guanylate kinase from Streptococcus pyogenes serotype M1.